Here is an 87-residue protein sequence, read N- to C-terminus: Omega-lycotoxin-Am1b (87 aa).

Residues 1–17 (MKLSIFFVLFFIAIAYC) form the signal peptide. The propeptide occupies 18 to 40 (QPEFLDDEEDEVEETLPVAEEGR). 4 cysteine pairs are disulfide-bonded: Cys44–Cys59, Cys51–Cys64, Cys58–Cys84, and Cys66–Cys82.

It belongs to the neurotoxin omega-lctx family. Expressed by the venom gland.

The protein resides in the secreted. In terms of biological role, modulates Cav2.1/CACNA1A voltage-gated calcium channels (P/Q-type currents) in rat cerebellar Purkinje cells and hippocampal CA1-CA3 neurons. At saturating concentrations (&gt;10 nM) decelerates activation kinetics and slightly increases peak amplitude without affecting deactivation kinetics. In vivo, does not cause death when intravenously injected into mice. In rat models, through its activity on Cav2.1/CACNA1A, has an ameliorative effect on memory defects provoked by hyperstimulation of N-methyl-D-aspartate receptors (NMDARs) in the hippocampus. The chain is Omega-lycotoxin-Am1b from Alopecosa marikovskyi (Wolf spider).